The following is a 466-amino-acid chain: Aladin (466 aa).

5 WD repeats span residues 135-174 (WLNS…TTAT), 179-218 (PSQT…HLGR), 229-269 (PNNL…MQPL), 271-310 (RLGP…TTER), and 378-418 (LVGG…FDLQ).

It is found in the nucleus. The protein localises to the nuclear pore complex. It localises to the cytoplasm. Its subcellular location is the cytoskeleton. The protein resides in the spindle. In terms of biological role, involved in mitotic spindle assembly. The chain is Aladin from Drosophila melanogaster (Fruit fly).